The following is a 3473-amino-acid chain: AP2/ERF domain-containing protein PFD0985w (3473 aa).

Disordered stretches follow at residues 35–61, 366–450, 647–704, 750–801, 1096–1196, 1300–1328, 1388–1418, 1773–1807, and 1864–1898; these read NNII…NNNN, KMER…HLVC, NNNN…INAK, NIIK…RKKK, VDNN…MNMN, DNTS…NSRG, HLRS…GAER, NNTG…NNKV, and IGED…NNLS. Composition is skewed to low complexity over residues 44–61, 396–442, and 647–666; these read NGHN…NNNN, NNND…NSNN, and NNNN…NNNN. Basic and acidic residues predominate over residues 683–694; it reads TGDKHETSKKED. The span at 751–768 shows a compositional bias: low complexity; it reads IIKSDNVNNNNNNNNNNN. The span at 785-801 shows a compositional bias: basic residues; that stretch reads NKKHKKKNIHDNNRKKK. The segment covering 1098–1156 has biased composition (low complexity); that stretch reads NNNNNNNNNNNNNVNNISNNGTNLEENANNANNANNPNNANNPNNANNSNNADYVNDYN. Positions 1160–1171 are enriched in acidic residues; sequence KEEDDDDEEEDN. A compositionally biased stretch (low complexity) spans 1182–1196; sequence TNYNININGENMNMN. Composition is skewed to polar residues over residues 1314 to 1326 and 1390 to 1412; these read VGSN…NNNS and RSSN…SSMR. Residues 1773 to 1805 show a composition bias toward low complexity; that stretch reads NNTGTTQNNNKYGTNSNNNNNNNNNNNNNNNNN. Residues 1881–1893 are compositionally biased toward basic residues; it reads LKRRKNGNSKRAK. The AP2/ERF 1 DNA-binding region spans 1957–2011; it reads PLPTGVYFDSARKLWRCQWKENGKFKTKGFSLIHYSTLEEARKQCILYRCDVGNI. 8 disordered regions span residues 2068 to 2088, 2319 to 2343, 2387 to 2470, 2520 to 2584, 2609 to 2677, 2840 to 2860, 2881 to 2902, and 2937 to 2960; these read EKTG…NVNN, QVDV…SNSK, TNDN…NIRS, LGNG…NYNN, LYGK…PASN, MNNN…NNVK, NDKL…SSSP, and KYVE…KKDE. Residues 2333–2342 show a composition bias toward basic residues; the sequence is KRSKRSKSNS. Composition is skewed to low complexity over residues 2388–2400 and 2409–2460; these read NDNN…NNND and DNNN…NNND. A compositionally biased stretch (acidic residues) spans 2525-2542; that stretch reads DGEEEGGGDYDEKEDDLL. Composition is skewed to low complexity over residues 2557–2584 and 2615–2624; these read NNNN…NYNN and NNNNNNNNNN. Residues 2663–2675 are compositionally biased toward polar residues; the sequence is LLNSQVNESSAPA. Residues 2841 to 2858 are compositionally biased toward low complexity; it reads NNNNNNNNNNNNNNNNNN. A compositionally biased stretch (basic and acidic residues) spans 2943 to 2953; that stretch reads NGDKETNDYNT. A DNA-binding region (AP2/ERF 2) is located at residues 3268–3321; sequence SLPKGIYYDHAKKLYRVQYIINNSIKTKGFSVKKLGLAQAKIEAESFRNFCLEN. The segment covering 3369-3391 has biased composition (low complexity); the sequence is KMSINNDGNNNDGNNNDGNNNDD. A disordered region spans residues 3369 to 3473; it reads KMSINNDGNN…NNDNEMSQNE (105 aa). The span at 3392–3403 shows a compositional bias: acidic residues; it reads NNNDDNNNDDNN. Low complexity predominate over residues 3404 to 3457; that stretch reads NDGNNNDDNNNEGINNDDNNNEGINNDDNNNEGINNNDDNNNNDDNNNEGINND.

Its subcellular location is the nucleus. In Plasmodium falciparum (isolate 3D7), this protein is AP2/ERF domain-containing protein PFD0985w.